The primary structure comprises 159 residues: ATP synthase subunit b 1 (159 aa).

Residues 5–25 form a helical membrane-spanning segment; that stretch reads FWAFIGLILFLALLFYFKVPA.

It belongs to the ATPase B chain family. As to quaternary structure, F-type ATPases have 2 components, F(1) - the catalytic core - and F(0) - the membrane proton channel. F(1) has five subunits: alpha(3), beta(3), gamma(1), delta(1), epsilon(1). F(0) has three main subunits: a(1), b(2) and c(10-14). The alpha and beta chains form an alternating ring which encloses part of the gamma chain. F(1) is attached to F(0) by a central stalk formed by the gamma and epsilon chains, while a peripheral stalk is formed by the delta and b chains.

It is found in the cell inner membrane. F(1)F(0) ATP synthase produces ATP from ADP in the presence of a proton or sodium gradient. F-type ATPases consist of two structural domains, F(1) containing the extramembraneous catalytic core and F(0) containing the membrane proton channel, linked together by a central stalk and a peripheral stalk. During catalysis, ATP synthesis in the catalytic domain of F(1) is coupled via a rotary mechanism of the central stalk subunits to proton translocation. Its function is as follows. Component of the F(0) channel, it forms part of the peripheral stalk, linking F(1) to F(0). The sequence is that of ATP synthase subunit b 1 from Bartonella bacilliformis (strain ATCC 35685 / KC583 / Herrer 020/F12,63).